The chain runs to 285 residues: Eukaryotic translation initiation factor 3 subunit F-2 (285 aa).

In terms of domain architecture, MPN spans 11–145 (VVLQPLVLFQ…TRLYCGVEMG (135 aa)).

It belongs to the eIF-3 subunit F family. As to quaternary structure, component of the eukaryotic translation initiation factor 3 (eIF-3) complex. The eIF-3 complex interacts with pix.

Its subcellular location is the cytoplasm. Its function is as follows. Component of the eukaryotic translation initiation factor 3 (eIF-3) complex, which is involved in protein synthesis of a specialized repertoire of mRNAs and, together with other initiation factors, stimulates binding of mRNA and methionyl-tRNAi to the 40S ribosome. The eIF-3 complex specifically targets and initiates translation of a subset of mRNAs involved in cell proliferation. The sequence is that of Eukaryotic translation initiation factor 3 subunit F-2 from Drosophila ananassae (Fruit fly).